The sequence spans 190 residues: FASEIAGVDDLGTTGRKTESIDVMDAVGSNIVVSTRFAYDGLKRQRLTEPMVRGLLTYTSWEDALSRFEAPLFNARVALIGSPVDLTYRYDHLGDSPKIASQVAALDLGYKPGVEAIRKNPPKLLFLLGADGGCITRSATYVNTEGRVAVTPPGLAREDWKALSEIAGITLPYDTLDQVRDFYMTDSISR.

This sequence belongs to the complex I 75 kDa subunit family. In terms of assembly, core subunit of respiratory chain NADH dehydrogenase (Complex I) which is composed of 45 different subunits. This is the largest subunit of complex I and it is a component of the iron-sulfur (IP) fragment of the enzyme. Complex I associates with ubiquinol-cytochrome reductase complex (Complex III) to form supercomplexes. Interacts with MDM2 and AKAP1. The cofactor is [2Fe-2S] cluster. Requires [4Fe-4S] cluster as cofactor.

It localises to the mitochondrion inner membrane. The catalysed reaction is a ubiquinone + NADH + 5 H(+)(in) = a ubiquinol + NAD(+) + 4 H(+)(out). Functionally, core subunit of the mitochondrial membrane respiratory chain NADH dehydrogenase (Complex I) which catalyzes electron transfer from NADH through the respiratory chain, using ubiquinone as an electron acceptor. Essential for catalysing the entry and efficient transfer of electrons within complex I. Plays a key role in the assembly and stability of complex I and participates in the association of complex I with ubiquinol-cytochrome reductase complex (Complex III) to form supercomplexes. In Mesocricetus auratus (Golden hamster), this protein is NADH-ubiquinone oxidoreductase 75 kDa subunit, mitochondrial.